Reading from the N-terminus, the 570-residue chain is Urease subunit alpha 1 (570 aa).

Residues 131–570 (GGIDTHVHFI…VPMAQRYFLF (440 aa)) enclose the Urease domain. Ni(2+)-binding residues include His-136, His-138, and Lys-219. Position 219 is an N6-carboxylysine (Lys-219). His-221 lines the substrate pocket. Residues His-248 and His-274 each coordinate Ni(2+). The Proton donor role is filled by His-322. Asp-362 contributes to the Ni(2+) binding site.

It belongs to the metallo-dependent hydrolases superfamily. Urease alpha subunit family. Heterotrimer of UreA (gamma), UreB (beta) and UreC (alpha) subunits. Three heterotrimers associate to form the active enzyme. Requires Ni cation as cofactor. Post-translationally, carboxylation allows a single lysine to coordinate two nickel ions.

Its subcellular location is the cytoplasm. The enzyme catalyses urea + 2 H2O + H(+) = hydrogencarbonate + 2 NH4(+). The protein operates within nitrogen metabolism; urea degradation; CO(2) and NH(3) from urea (urease route): step 1/1. The sequence is that of Urease subunit alpha 1 from Brucella melitensis biotype 1 (strain ATCC 23456 / CCUG 17765 / NCTC 10094 / 16M).